We begin with the raw amino-acid sequence, 84 residues long: uncharacterized protein (84 aa).

This is an uncharacterized protein from Bos taurus (Bovine).